The following is a 72-amino-acid chain: DNA gyrase inhibitor YacG (72 aa).

Zn(2+)-binding residues include C17, C20, C32, and C36. The segment at 51 to 72 (IPGPEEEEMSYPPRSDDENRSR) is disordered.

The protein belongs to the DNA gyrase inhibitor YacG family. In terms of assembly, interacts with GyrB. Zn(2+) is required as a cofactor.

Functionally, inhibits all the catalytic activities of DNA gyrase by preventing its interaction with DNA. Acts by binding directly to the C-terminal domain of GyrB, which probably disrupts DNA binding by the gyrase. The chain is DNA gyrase inhibitor YacG from Methylorubrum extorquens (strain PA1) (Methylobacterium extorquens).